The sequence spans 373 residues: NADPH-dependent 3-keto-steroid reductase HSD3B3 (373 aa).

NADP(+)-binding positions include 10–15 (GAGGFL), Tyr-155, and Lys-159. Lys-159 (proton donor) is an active-site residue. A helical membrane pass occupies residues 288-308 (VALLYWFGFLLETVSFLLRPV).

It belongs to the 3-beta-HSD family. High levels in adrenal gland, kidney and male liver (at protein level). Low levels in female liver (at protein level). Expressed in ovaries (at protein level).

The protein resides in the endoplasmic reticulum membrane. The protein localises to the mitochondrion membrane. It catalyses the reaction a 3beta-hydroxysteroid + NADP(+) = a 3-oxosteroid + NADPH + H(+). The enzyme catalyses 5alpha-androstane-3beta,17beta-diol + NADP(+) = 17beta-hydroxy-5alpha-androstan-3-one + NADPH + H(+). It participates in steroid metabolism. Its function is as follows. Responsible for the reduction of the oxo group on the C-3 of 5alpha-androstane steroids. Catalyzes the conversion of dihydrotestosterone to its inactive form 5alpha-androstanediol, that does not bind androgen receptor/AR. Does not function as an isomerase. The chain is NADPH-dependent 3-keto-steroid reductase HSD3B3 (HSD3B3) from Mesocricetus auratus (Golden hamster).